The chain runs to 155 residues: Putative pre-16S rRNA nuclease (155 aa).

The protein belongs to the YqgF nuclease family.

It localises to the cytoplasm. Could be a nuclease involved in processing of the 5'-end of pre-16S rRNA. In Xanthomonas oryzae pv. oryzae (strain MAFF 311018), this protein is Putative pre-16S rRNA nuclease.